A 208-amino-acid polypeptide reads, in one-letter code: Large ribosomal subunit protein bL25 (208 aa).

A disordered region spans residues 188-208 (AVETETEEETTTGESPAQPAE).

This sequence belongs to the bacterial ribosomal protein bL25 family. CTC subfamily. In terms of assembly, part of the 50S ribosomal subunit; part of the 5S rRNA/L5/L18/L25 subcomplex. Contacts the 5S rRNA. Binds to the 5S rRNA independently of L5 and L18.

Functionally, this is one of the proteins that binds to the 5S RNA in the ribosome where it forms part of the central protuberance. The polypeptide is Large ribosomal subunit protein bL25 (Moorella thermoacetica (strain ATCC 39073 / JCM 9320)).